The following is a 306-amino-acid chain: Porphobilinogen deaminase (306 aa).

Cysteine 239 bears the S-(dipyrrolylmethanemethyl)cysteine mark.

This sequence belongs to the HMBS family. As to quaternary structure, monomer. Dipyrromethane serves as cofactor.

It catalyses the reaction 4 porphobilinogen + H2O = hydroxymethylbilane + 4 NH4(+). Its pathway is porphyrin-containing compound metabolism; protoporphyrin-IX biosynthesis; coproporphyrinogen-III from 5-aminolevulinate: step 2/4. In terms of biological role, tetrapolymerization of the monopyrrole PBG into the hydroxymethylbilane pre-uroporphyrinogen in several discrete steps. In Helicobacter pylori (strain HPAG1), this protein is Porphobilinogen deaminase.